We begin with the raw amino-acid sequence, 450 residues long: Serine/threonine-protein kinase-transforming protein Rmil (450 aa).

2 stretches are compositionally biased toward basic and acidic residues: residues 1–14 and 49–73; these read MEAV…DQGV and QRER…RDSS. The disordered stretch occupies residues 1-80; the sequence is MEAVIKDLIR…DSSDDWEIPD (80 aa). In terms of domain architecture, Protein kinase spans 83–343; the sequence is ITVGQRIGSG…PQILASIELL (261 aa). ATP-binding positions include 89-97 and K109; that span reads IGSGSFGTV. D202 (proton acceptor) is an active-site residue.

The protein belongs to the protein kinase superfamily. TKL Ser/Thr protein kinase family. RAF subfamily.

The enzyme catalyses L-seryl-[protein] + ATP = O-phospho-L-seryl-[protein] + ADP + H(+). The catalysed reaction is L-threonyl-[protein] + ATP = O-phospho-L-threonyl-[protein] + ADP + H(+). This is Serine/threonine-protein kinase-transforming protein Rmil (V-RMIL) from Avian rous-associated virus type 1.